Consider the following 223-residue polypeptide: Cuticular glutathione peroxidase (223 aa).

Residues methionine 1–alanine 19 form the signal peptide. Asparagine 39 carries N-linked (GlcNAc...) asparagine glycosylation. Cysteine 74 is an active-site residue. Residue asparagine 92 is glycosylated (N-linked (GlcNAc...) asparagine).

This sequence belongs to the glutathione peroxidase family. Homotetramer.

Its subcellular location is the secreted. The enzyme catalyses 2 glutathione + H2O2 = glutathione disulfide + 2 H2O. Functionally, could inhibit the oxidative burst of leukocytes and neutralize the secondary products of lipid peroxidation, thus providing the resistance of these parasites to immune effector mechanisms and their persistence in the mammalian host. It may also be involved in the formation of cross-linking residues such as dityrosine, trityrosine and isotrityrosine identified in cuticular collagen. Highly cross-linked external cortex may also serve to protect the parasite from immune attack. The sequence is that of Cuticular glutathione peroxidase from Brugia malayi (Filarial nematode worm).